We begin with the raw amino-acid sequence, 880 residues long: Alanine--tRNA ligase (880 aa).

Zn(2+) is bound by residues histidine 563, histidine 567, cysteine 673, and histidine 677.

The protein belongs to the class-II aminoacyl-tRNA synthetase family. Requires Zn(2+) as cofactor.

It is found in the cytoplasm. The catalysed reaction is tRNA(Ala) + L-alanine + ATP = L-alanyl-tRNA(Ala) + AMP + diphosphate. In terms of biological role, catalyzes the attachment of alanine to tRNA(Ala) in a two-step reaction: alanine is first activated by ATP to form Ala-AMP and then transferred to the acceptor end of tRNA(Ala). Also edits incorrectly charged Ser-tRNA(Ala) and Gly-tRNA(Ala) via its editing domain. This chain is Alanine--tRNA ligase, found in Caulobacter vibrioides (strain ATCC 19089 / CIP 103742 / CB 15) (Caulobacter crescentus).